A 198-amino-acid chain; its full sequence is Glycerol-3-phosphate acyltransferase (198 aa).

6 helical membrane-spanning segments follow: residues 1 to 21, 55 to 75, 79 to 99, 111 to 131, 136 to 156, and 158 to 178; these read MNLLILFFGYLFGSFPSGYLA, VFLLDVFKGVLSILLAKYLLL, WQVAVGLSTLIGHIWPVWLNW, IFLGLSWQVGLATLGVFIIMI, IVSLASVSASLALPLIMFLSF, and GSNLSLPFLIVSLLAMILVIW.

Belongs to the PlsY family. As to quaternary structure, probably interacts with PlsX.

It localises to the cell inner membrane. It carries out the reaction an acyl phosphate + sn-glycerol 3-phosphate = a 1-acyl-sn-glycero-3-phosphate + phosphate. The protein operates within lipid metabolism; phospholipid metabolism. Functionally, catalyzes the transfer of an acyl group from acyl-phosphate (acyl-PO(4)) to glycerol-3-phosphate (G3P) to form lysophosphatidic acid (LPA). This enzyme utilizes acyl-phosphate as fatty acyl donor, but not acyl-CoA or acyl-ACP. The polypeptide is Glycerol-3-phosphate acyltransferase (Prochlorococcus marinus (strain NATL2A)).